A 277-amino-acid polypeptide reads, in one-letter code: MIIELAKNYGFCFGVKRAIKKAEQIKDAATIGPLIHNNEEISRLQKNFNVKTLENIKSLSNETKAIIRTHGITKQDLEELRKKDIEIFDATCPFVTKPQQICEQMSKEGYEIVIFGDENHPEVKGVKSYVNTKAYVVLDKKELQNIKLPSKIAVVSQTTKKPEHFMEIVNFLMLKAKEVRVFNTICDATFKNQDAIKELSLKSDVMVVVGGKNSANTKQLFLIAKTNCEDSYLIETEEELKKEWFLDKKHCGISAGASTPDWIIQKVIAKIENFGIN.

Residue C12 participates in [4Fe-4S] cluster binding. Positions 36 and 70 each coordinate (2E)-4-hydroxy-3-methylbut-2-enyl diphosphate. Residues H36 and H70 each contribute to the dimethylallyl diphosphate site. Isopentenyl diphosphate contacts are provided by H36 and H70. Residue C92 participates in [4Fe-4S] cluster binding. H120 contacts (2E)-4-hydroxy-3-methylbut-2-enyl diphosphate. H120 is a binding site for dimethylallyl diphosphate. Position 120 (H120) interacts with isopentenyl diphosphate. E122 (proton donor) is an active-site residue. T158 contributes to the (2E)-4-hydroxy-3-methylbut-2-enyl diphosphate binding site. C186 provides a ligand contact to [4Fe-4S] cluster. Positions 214, 216, and 258 each coordinate (2E)-4-hydroxy-3-methylbut-2-enyl diphosphate. Dimethylallyl diphosphate contacts are provided by S214, N216, and S258. Residues S214, N216, and S258 each contribute to the isopentenyl diphosphate site.

The protein belongs to the IspH family. [4Fe-4S] cluster serves as cofactor.

It catalyses the reaction isopentenyl diphosphate + 2 oxidized [2Fe-2S]-[ferredoxin] + H2O = (2E)-4-hydroxy-3-methylbut-2-enyl diphosphate + 2 reduced [2Fe-2S]-[ferredoxin] + 2 H(+). It carries out the reaction dimethylallyl diphosphate + 2 oxidized [2Fe-2S]-[ferredoxin] + H2O = (2E)-4-hydroxy-3-methylbut-2-enyl diphosphate + 2 reduced [2Fe-2S]-[ferredoxin] + 2 H(+). Its pathway is isoprenoid biosynthesis; dimethylallyl diphosphate biosynthesis; dimethylallyl diphosphate from (2E)-4-hydroxy-3-methylbutenyl diphosphate: step 1/1. It participates in isoprenoid biosynthesis; isopentenyl diphosphate biosynthesis via DXP pathway; isopentenyl diphosphate from 1-deoxy-D-xylulose 5-phosphate: step 6/6. Catalyzes the conversion of 1-hydroxy-2-methyl-2-(E)-butenyl 4-diphosphate (HMBPP) into a mixture of isopentenyl diphosphate (IPP) and dimethylallyl diphosphate (DMAPP). Acts in the terminal step of the DOXP/MEP pathway for isoprenoid precursor biosynthesis. The protein is 4-hydroxy-3-methylbut-2-enyl diphosphate reductase of Campylobacter jejuni subsp. doylei (strain ATCC BAA-1458 / RM4099 / 269.97).